Reading from the N-terminus, the 379-residue chain is Serine/threonine-protein kinase spe-6 (379 aa).

Positions 26 to 302 constitute a Protein kinase domain; it reads WKVLRNIYSG…SQAATEHQVT (277 aa). Residues 32–40 and K55 contribute to the ATP site; that span reads IYSGPFSDV. D147 functions as the Proton acceptor in the catalytic mechanism. The disordered stretch occupies residues 331-379; that stretch reads ASAKLDAKDNANESMDIEFDDMPPKEGISKSLSAEKSCTKNVETARTEK. Positions 360 to 372 are enriched in polar residues; that stretch reads KSLSAEKSCTKNV.

The protein belongs to the protein kinase superfamily. CK1 Ser/Thr protein kinase family.

It catalyses the reaction L-seryl-[protein] + ATP = O-phospho-L-seryl-[protein] + ADP + H(+). The catalysed reaction is L-threonyl-[protein] + ATP = O-phospho-L-threonyl-[protein] + ADP + H(+). In terms of biological role, serine/threonine-protein kinase which is involved in spermatogenesis. In spermatocytes, regulates meiosis and the localization and assembly of major sperm protein (MSP) into fibrous bodies. In addition, may suppress the initiation of spermiogenesis downstream of spe-8, spe-12, spe-27 and spe-29. The sequence is that of Serine/threonine-protein kinase spe-6 from Caenorhabditis elegans.